A 1101-amino-acid polypeptide reads, in one-letter code: MTYPVSAAAPADISYSKNTPLVGLSKPPCLYQHASSSVDSFSSTFSDDDRSDLVAVPNESPHAFSYNPISPNSLGVRLTILRRSLEIMVNSPDILHELKKKAPVIAYPPSLRHTRNLTETATLSASRDPLNGSLISPLVSNMPSPASRPVIQRATSLMVLPDNDTASKLNPAKSELENLLFLLNLALENNSFERASDLHMLSLLNIKKINFDSDIQKSETLKKVLLDSLAEPFFENYKKFPHKDLGSKSQYNEYEEKHDDIVSLADIKPQQDYSRILHPFTSAKNSGPEAIFTCSQQYPWNFKAANDLACLTFGISKNVIKALTLLDLIHTDSRNFVLEKIMNAEDDNQEIVFTGETIPIVQPNSTSNNNVPNLIWASLWAKRKNGLLVCVFEKTPCDYIDVMLNLRDFSVDSIIDTTHFLENFDKKKQQESTSPMTEKKTVKFANEIHDIGSVSHSLSKLIDDVRFGKVFSADDDLLPLSIRVANHVNEERYFTLNCLSENIPCAVTTSVLENEIKLKIHSLPYQAGLFIVDSHTLSLLSFNKSVAKNMFGLRLHELAGSSVTKLVPSLADMISYINKTYPMLNITLPENKGLVLTEHFFRKIEAEMHHDKDSFYTSIGLDGCHKDGNLIKVDVQLRVLNTNAVLLWITHSRDVVIENYTTVPSQLPMLKENEIDVVGSRGSSSASSKKSSEKIPVNTLKAMADLSISSAETISNSDDEVDLNQVNEKLRETSCGKVRGIESNDNNNYDDDMTMVDDPELKHKIELTKMYTQDKSKFVKDDNFKVDEKFIMRIIEPINGEEIKKETNELDKRNSTLKATYLTTPEANIGSQKRIKKFSDFTILQVMGEGAYGKVNLCIHNREHYIVVIKMIFKERILVDTWVRDRKLGTIPSEIQIMATLNKNSQENILKLLDFFEDDDYYYIETPVHGETGSIDLFDVIEFKKDMVEHEAKLVFKQVVASIKHLHDQGIVHRDIKDENVIVDSHGFVKLIDFGSAAYIKSGPFDVFVGTMDYAAPEVLGGSSYKGKPQDIWALGVLLYTIIYKENPYYNIDEILEGELRFDKSEHVSEECISLIKRILTREVDKRPTIDEIYEDKWLKI.

The residue at position 118 (threonine 118) is a Phosphothreonine. Positions 841 to 1099 (FTILQVMGEG…IDEIYEDKWL (259 aa)) constitute a Protein kinase domain. Residues 847–855 (MGEGAYGKV) and lysine 870 each bind ATP. The active-site Proton acceptor is the aspartate 975.

Belongs to the protein kinase superfamily. Ser/Thr protein kinase family.

The protein localises to the cytoplasm. The enzyme catalyses L-seryl-[protein] + ATP = O-phospho-L-seryl-[protein] + ADP + H(+). It catalyses the reaction L-threonyl-[protein] + ATP = O-phospho-L-threonyl-[protein] + ADP + H(+). In terms of biological role, serine/threonine-protein kinase involved in the control of sugar metabolism and translation. Phosphorylates UGP1, which is required for normal glycogen and beta-(1,6)-glucan synthesis. This phosphorylation shifts glucose partitioning toward cell wall glucan synthesis at the expense of glycogen synthesis. Also phosphorylates the glycogen synthase GSY2 and the translation factors CAF20, TIF11 and SRO9. This chain is Serine/threonine-protein kinase PSK2 (PSK2), found in Saccharomyces cerevisiae (strain ATCC 204508 / S288c) (Baker's yeast).